A 264-amino-acid chain; its full sequence is Virulence plasmid ParA family protein pGP5-D (264 aa).

An ATP-binding site is contributed by 9-16 (FKGGTGKT).

It belongs to the ParA family.

Its function is as follows. Required for growth within mammalian cells. This Chlamydia trachomatis protein is Virulence plasmid ParA family protein pGP5-D.